The following is a 473-amino-acid chain: GTPase Der (473 aa).

EngA-type G domains are found at residues 3 to 167 (LTIA…GKDK) and 204 to 379 (IRIA…RIWN). Residues 9 to 16 (GRPNVGKS), 56 to 60 (DTAGL), 119 to 122 (NKSE), 210 to 217 (GRPNTGKS), 257 to 261 (DTAGL), and 322 to 325 (NKWD) each bind GTP. One can recognise a KH-like domain in the interval 380-464 (RRISTGKLNR…PIRLSLRTSD (85 aa)).

The protein belongs to the TRAFAC class TrmE-Era-EngA-EngB-Septin-like GTPase superfamily. EngA (Der) GTPase family. As to quaternary structure, associates with the 50S ribosomal subunit.

Functionally, GTPase that plays an essential role in the late steps of ribosome biogenesis. The protein is GTPase Der of Bartonella bacilliformis (strain ATCC 35685 / KC583 / Herrer 020/F12,63).